A 126-amino-acid polypeptide reads, in one-letter code: Small ribosomal subunit protein uS13 (126 aa).

Residues 95 to 126 (GLPVRGQRTHTNARTRKGPRKTVAGKKKPGKK) form a disordered region.

It belongs to the universal ribosomal protein uS13 family. As to quaternary structure, part of the 30S ribosomal subunit. Forms a loose heterodimer with protein S19. Forms two bridges to the 50S subunit in the 70S ribosome.

Its function is as follows. Located at the top of the head of the 30S subunit, it contacts several helices of the 16S rRNA. In the 70S ribosome it contacts the 23S rRNA (bridge B1a) and protein L5 of the 50S subunit (bridge B1b), connecting the 2 subunits; these bridges are implicated in subunit movement. Contacts the tRNAs in the A and P-sites. The sequence is that of Small ribosomal subunit protein uS13 from Acidothermus cellulolyticus (strain ATCC 43068 / DSM 8971 / 11B).